Reading from the N-terminus, the 448-residue chain is Probable D-serine dehydratase (448 aa).

Residue lysine 119 is modified to N6-(pyridoxal phosphate)lysine.

This sequence belongs to the serine/threonine dehydratase family. DsdA subfamily. It depends on pyridoxal 5'-phosphate as a cofactor.

The catalysed reaction is D-serine = pyruvate + NH4(+). This chain is Probable D-serine dehydratase, found in Pseudomonas aeruginosa (strain ATCC 15692 / DSM 22644 / CIP 104116 / JCM 14847 / LMG 12228 / 1C / PRS 101 / PAO1).